Reading from the N-terminus, the 96-residue chain is Glutamyl-tRNA(Gln) amidotransferase subunit C (96 aa).

It belongs to the GatC family. Heterotrimer of A, B and C subunits.

It carries out the reaction L-glutamyl-tRNA(Gln) + L-glutamine + ATP + H2O = L-glutaminyl-tRNA(Gln) + L-glutamate + ADP + phosphate + H(+). The catalysed reaction is L-aspartyl-tRNA(Asn) + L-glutamine + ATP + H2O = L-asparaginyl-tRNA(Asn) + L-glutamate + ADP + phosphate + 2 H(+). Its function is as follows. Allows the formation of correctly charged Asn-tRNA(Asn) or Gln-tRNA(Gln) through the transamidation of misacylated Asp-tRNA(Asn) or Glu-tRNA(Gln) in organisms which lack either or both of asparaginyl-tRNA or glutaminyl-tRNA synthetases. The reaction takes place in the presence of glutamine and ATP through an activated phospho-Asp-tRNA(Asn) or phospho-Glu-tRNA(Gln). This is Glutamyl-tRNA(Gln) amidotransferase subunit C from Neisseria meningitidis serogroup A / serotype 4A (strain DSM 15465 / Z2491).